The primary structure comprises 290 residues: Probable 2-(5''-triphosphoribosyl)-3'-dephosphocoenzyme-A synthase (290 aa).

This sequence belongs to the CitG/MdcB family.

It catalyses the reaction 3'-dephospho-CoA + ATP = 2'-(5''-triphospho-alpha-D-ribosyl)-3'-dephospho-CoA + adenine. Involved in the formation of 2-(5''-phosphoribosyl)-3'-dephosphocoenzyme-A, the prosthetic group of the acyl-carrier protein of the malonate decarboxylase. The polypeptide is Probable 2-(5''-triphosphoribosyl)-3'-dephosphocoenzyme-A synthase (Stutzerimonas stutzeri (strain A1501) (Pseudomonas stutzeri)).